Here is a 402-residue protein sequence, read N- to C-terminus: Bacteriochlorophyllide c C-7(1)-hydroxylase (402 aa).

Residues 104-359 (VIGMNQDIIN…IKYQDRFDMP (256 aa)) form the Radical SAM core domain. Positions 120, 129, and 132 each coordinate [4Fe-4S] cluster.

This sequence belongs to the radical SAM superfamily. The cofactor is [4Fe-4S] cluster.

It catalyses the reaction a bacteriochlorophyllide c + 2 S-adenosyl-L-methionine + H2O = a bacteriochlorophyllide e + 2 5'-deoxyadenosine + 2 L-methionine + 2 H(+). The enzyme catalyses a bacteriochlorophyllide d + 2 S-adenosyl-L-methionine + H2O = a bacteriochlorophyllide f + 2 5'-deoxyadenosine + 2 L-methionine + 2 H(+). The protein operates within porphyrin-containing compound metabolism; bacteriochlorophyll biosynthesis. Functionally, involved in the biosynthesis of bacteriochlorophyll e (BChl e). Catalyzes two consecutive hydroxylation reactions of the C-7 methyl group of bacteriochlorophyllide c (BChlide c) to form a geminal diol intermediate that spontaneously dehydrates to produce the formyl group of bacteriochlorophyllide e (BChlide e). Also able to catalyze the same reaction for bacteriochlorophyllide d (BChlide d) to give rise to bacteriochlorophyllide f (BChlide f). The sequence is that of Bacteriochlorophyllide c C-7(1)-hydroxylase from Chlorobaculum limnaeum.